The sequence spans 422 residues: UDP-N-acetylglucosamine 1-carboxyvinyltransferase (422 aa).

23–24 (KN) lines the phosphoenolpyruvate pocket. R92 contacts UDP-N-acetyl-alpha-D-glucosamine. C116 (proton donor) is an active-site residue. Residue C116 is modified to 2-(S-cysteinyl)pyruvic acid O-phosphothioketal. UDP-N-acetyl-alpha-D-glucosamine-binding positions include 121–125 (RPVDL), 161–165 (KVSVG), D306, and I328.

This sequence belongs to the EPSP synthase family. MurA subfamily.

The protein localises to the cytoplasm. It catalyses the reaction phosphoenolpyruvate + UDP-N-acetyl-alpha-D-glucosamine = UDP-N-acetyl-3-O-(1-carboxyvinyl)-alpha-D-glucosamine + phosphate. The protein operates within cell wall biogenesis; peptidoglycan biosynthesis. Its function is as follows. Cell wall formation. Adds enolpyruvyl to UDP-N-acetylglucosamine. The chain is UDP-N-acetylglucosamine 1-carboxyvinyltransferase from Aliivibrio fischeri (strain MJ11) (Vibrio fischeri).